Reading from the N-terminus, the 492-residue chain is Protein nucleotidyltransferase YdiU (492 aa).

ATP-binding residues include G91, G93, R94, K114, D126, G127, R177, and R184. The active-site Proton acceptor is D253. Mg(2+) is bound by residues N254 and D263. D263 serves as a coordination point for ATP.

Belongs to the SELO family. Mg(2+) serves as cofactor. Requires Mn(2+) as cofactor.

It catalyses the reaction L-seryl-[protein] + ATP = 3-O-(5'-adenylyl)-L-seryl-[protein] + diphosphate. The enzyme catalyses L-threonyl-[protein] + ATP = 3-O-(5'-adenylyl)-L-threonyl-[protein] + diphosphate. It carries out the reaction L-tyrosyl-[protein] + ATP = O-(5'-adenylyl)-L-tyrosyl-[protein] + diphosphate. The catalysed reaction is L-histidyl-[protein] + UTP = N(tele)-(5'-uridylyl)-L-histidyl-[protein] + diphosphate. It catalyses the reaction L-seryl-[protein] + UTP = O-(5'-uridylyl)-L-seryl-[protein] + diphosphate. The enzyme catalyses L-tyrosyl-[protein] + UTP = O-(5'-uridylyl)-L-tyrosyl-[protein] + diphosphate. Nucleotidyltransferase involved in the post-translational modification of proteins. It can catalyze the addition of adenosine monophosphate (AMP) or uridine monophosphate (UMP) to a protein, resulting in modifications known as AMPylation and UMPylation. The sequence is that of Protein nucleotidyltransferase YdiU from Maridesulfovibrio salexigens (strain ATCC 14822 / DSM 2638 / NCIMB 8403 / VKM B-1763) (Desulfovibrio salexigens).